Here is a 351-residue protein sequence, read N- to C-terminus: D-alanine--D-alanine ligase (351 aa).

In terms of domain architecture, ATP-grasp spans Asn135–Glu343. Residue Leu167–Ser222 participates in ATP binding. Residues Asp298, Glu310, and Asn312 each coordinate Mg(2+).

Belongs to the D-alanine--D-alanine ligase family. Mg(2+) serves as cofactor. Requires Mn(2+) as cofactor.

It localises to the cytoplasm. The catalysed reaction is 2 D-alanine + ATP = D-alanyl-D-alanine + ADP + phosphate + H(+). The protein operates within cell wall biogenesis; peptidoglycan biosynthesis. Functionally, cell wall formation. The sequence is that of D-alanine--D-alanine ligase from Leptospira interrogans serogroup Icterohaemorrhagiae serovar Lai (strain 56601).